The chain runs to 527 residues: Ankyrin repeat domain-containing protein 42 (527 aa).

Residues 1–27 (MPGVANPGPSKSRRETADSSSRKKVHF) form a disordered region. Positions 12 to 21 (SRRETADSSS) are enriched in basic and acidic residues. 10 ANK repeats span residues 25-54 (VHFS…NLNE), 59-88 (HQFT…DATQ), 92-121 (RGWT…NLAT), 125-154 (RGCT…DPSV), 158-187 (REWK…GIED), 191-220 (NGNL…SATQ), 228-257 (NGEN…EGSH), 263-293 (DLAF…NLNE), 297-326 (NGST…ESNI), and 330-360 (AGET…EIDD). The stretch at 395-484 (NARMRAHKKI…ETLQKIQVTS (90 aa)) forms a coiled coil.

The polypeptide is Ankyrin repeat domain-containing protein 42 (Ankrd42) (Mus musculus (Mouse)).